A 91-amino-acid chain; its full sequence is Small ribosomal subunit protein uS19 (91 aa).

This sequence belongs to the universal ribosomal protein uS19 family.

Functionally, protein S19 forms a complex with S13 that binds strongly to the 16S ribosomal RNA. The protein is Small ribosomal subunit protein uS19 of Bordetella avium (strain 197N).